The primary structure comprises 662 residues: Glutathione hydrolase 7 (662 aa).

Residues 1–106 are Cytoplasmic-facing; that stretch reads MAAENEASQE…AAECSCRQDG (106 aa). Ser-17, Ser-72, Ser-79, and Ser-83 each carry phosphoserine. Residues 26-90 are disordered; sequence SFPRLPEDEP…DGSPLRETRK (65 aa). Positions 72-83 are enriched in low complexity; sequence SSSSEMGSQDGS. The helical; Signal-anchor for type II membrane protein transmembrane segment at 107–127 threads the bilayer; sequence LTVIVTACLTFATGVTVALVM. Residues 128 to 662 are Extracellular-facing; it reads QIYFGDPQIF…SPDAAGATIL (535 aa). Asn-198, Asn-267, Asn-283, Asn-330, Asn-353, Asn-394, Asn-519, Asn-523, and Asn-586 each carry an N-linked (GlcNAc...) asparagine glycan.

This sequence belongs to the gamma-glutamyltransferase family. As to quaternary structure, heterodimer composed of the light and heavy chains. The active site is located in the light chain. Post-translationally, cleaved by autocatalysis into a large and a small subunit and the autocatalytic cleavage is essential to the functional activation of the enzyme.

The protein resides in the membrane. It catalyses the reaction an N-terminal (5-L-glutamyl)-[peptide] + an alpha-amino acid = 5-L-glutamyl amino acid + an N-terminal L-alpha-aminoacyl-[peptide]. The catalysed reaction is glutathione + H2O = L-cysteinylglycine + L-glutamate. It carries out the reaction an S-substituted glutathione + H2O = an S-substituted L-cysteinylglycine + L-glutamate. It participates in sulfur metabolism; glutathione metabolism. Its function is as follows. Hydrolyzes and transfers gamma-glutamyl moieties from glutathione and other gamma-glutamyl compounds to acceptors. This chain is Glutathione hydrolase 7, found in Mus musculus (Mouse).